The primary structure comprises 162 residues: uncharacterized protein (162 aa).

The signal sequence occupies residues methionine 1 to alanine 34.

This is an uncharacterized protein from Archaeoglobus fulgidus (strain ATCC 49558 / DSM 4304 / JCM 9628 / NBRC 100126 / VC-16).